The chain runs to 297 residues: MRIAAIINARAGTVLRMSPSAVTERLSVVWGSLGHDAAIILAEGKDMGRMVRKACRDPDIRAIIIGGGDGSLSRALEHVLASGKSLGVLPLGTMNYMARQIGMPLDLAQAAVALAGAVQTPMDVGRVNDRYFLIRACFGAFPEFIQSRDRVRRKGGSFLEGALAGLSGVARRYRIVEAELSSPGGRARIATSFLMISNNLCRDSDPFLLERERMDGGSLGVYVGRSAGPVGLMELGLQAAMGRWASNEALFQGEMHWLEVQTEQRKPLISIDGEVEKMEGPFRFDILPGALSILVPK.

Residues E43 to Y131 form the DAGKc domain. Residue G68 to R74 coordinates ATP. E274 functions as the Proton acceptor in the catalytic mechanism.

It belongs to the diacylglycerol/lipid kinase family.

Its subcellular location is the cytoplasm. In terms of biological role, might phosphorylate lipids. In Magnetospirillum gryphiswaldense (strain DSM 6361 / JCM 21280 / NBRC 15271 / MSR-1), this protein is Putative lipid kinase MamU.